The following is a 141-amino-acid chain: Hemoglobin D subunit alpha (141 aa).

The Globin domain occupies 1 to 141; it reads MLTEDDKQLI…VSAVLAEKYR (141 aa). Position 58 (histidine 58) interacts with O2. Histidine 87 provides a ligand contact to heme b.

This sequence belongs to the globin family. As to quaternary structure, tetramer of two alpha chains and two beta chains. In terms of tissue distribution, red blood cells.

Its function is as follows. Involved in oxygen transport from the lung to the various peripheral tissues. The protein is Hemoglobin D subunit alpha of Aldabrachelys gigantea (Aldabra giant tortoise).